Consider the following 436-residue polypeptide: Xylose isomerase (436 aa).

Asp-306 and Asp-308 together coordinate Mg(2+).

It belongs to the xylose isomerase family. In terms of assembly, homotetramer. Mg(2+) is required as a cofactor.

It is found in the cytoplasm. The catalysed reaction is alpha-D-xylose = alpha-D-xylulofuranose. This is Xylose isomerase from Rhizobium rhizogenes (strain K84 / ATCC BAA-868) (Agrobacterium radiobacter).